A 1086-amino-acid polypeptide reads, in one-letter code: Isoleucine--tRNA ligase (1086 aa).

Residues 53–63 carry the 'HIGH' region motif; the sequence is PFANGLPHYGH. The short motif at 624–628 is the 'KMSKS' region element; the sequence is KLSKR. An ATP-binding site is contributed by Lys-627.

This sequence belongs to the class-I aminoacyl-tRNA synthetase family. IleS type 2 subfamily. Monomer. Zn(2+) is required as a cofactor.

Its subcellular location is the cytoplasm. The catalysed reaction is tRNA(Ile) + L-isoleucine + ATP = L-isoleucyl-tRNA(Ile) + AMP + diphosphate. Its function is as follows. Catalyzes the attachment of isoleucine to tRNA(Ile). As IleRS can inadvertently accommodate and process structurally similar amino acids such as valine, to avoid such errors it has two additional distinct tRNA(Ile)-dependent editing activities. One activity is designated as 'pretransfer' editing and involves the hydrolysis of activated Val-AMP. The other activity is designated 'posttransfer' editing and involves deacylation of mischarged Val-tRNA(Ile). This Rickettsia typhi (strain ATCC VR-144 / Wilmington) protein is Isoleucine--tRNA ligase.